Consider the following 456-residue polypeptide: Phospholipase A1 member A (456 aa).

Residues 1–25 form the signal peptide; the sequence is MPPDFWERCFWLWGLLLWLSVGSTG. Residue N34 is glycosylated (N-linked (GlcNAc...) asparagine). The active-site Nucleophile is S166. D190 acts as the Charge relay system in catalysis. Residues C245 and C258 are joined by a disulfide bond. The Charge relay system role is filled by H260. Cystine bridges form between C282/C293 and C296/C304.

The protein belongs to the AB hydrolase superfamily. Lipase family.

It localises to the secreted. It carries out the reaction a 1,2-diacyl-sn-glycero-3-phospho-L-serine + H2O = a 2-acyl-sn-glycero-3-phospho-L-serine + a fatty acid + H(+). The enzyme catalyses 1,2-di-(9Z)-octadecenoyl-sn-glycero-3-phospho-L-serine + H2O = 2-(9Z-octadecenoyl)-sn-glycero-3-phospho-L-serine + (9Z)-octadecenoate + H(+). The catalysed reaction is 1-hexadecanoyl-2-(5Z,8Z,11Z,14Z-eicosatetraenoyl)-sn-glycero-3-phospho-L-serine + H2O = 2-(5Z,8Z,11Z,14Z)-eicosatetraenoyl-sn-glycero-3-phospho-L-serine + hexadecanoate + H(+). It catalyses the reaction a 1-acyl-sn-glycero-3-phospho-L-serine + H2O = sn-glycero-3-phospho-L-serine + a fatty acid + H(+). It carries out the reaction 1-(9Z-octadecenoyl)-sn-glycero-3-phospho-L-serine + H2O = sn-glycero-3-phospho-L-serine + (9Z)-octadecenoate + H(+). Functionally, hydrolyzes the ester bond of the acyl group attached at the sn-1 position of phosphatidylserines (phospholipase A1 activity) and 1-acyl-2-lysophosphatidylserines (lysophospholipase activity) in the pathway of phosphatidylserines acyl chain remodeling. Cleaves phosphatidylserines exposed on the outer leaflet of the plasma membrane of apoptotic cells producing 2-acyl-1-lysophosphatidylserines, which in turn enhance mast cell activation and histamine production. Has no activity toward other glycerophospholipids including phosphatidylcholines, phosphatidylethanolamines, phosphatidic acids or phosphatidylinositols, or glycerolipids such as triolein. In Bos taurus (Bovine), this protein is Phospholipase A1 member A (PLA1A).